The sequence spans 837 residues: Phosphatidylethanolamine N-methyltransferase (837 aa).

The Lumenal segment spans residues 1-36 (MASDVVARTRSSGVTFTPPTTHDMVRSLFDPTVRKS). The chain crosses the membrane as a helical span at residues 37–57 (FLEICITLALLSDFVFCYWGL). At 58-67 (QRFGLTSMKK) the chain is on the cytoplasmic side. Residues 68–88 (AFLAQYLFWRLCYNLGIGVAL) form a helical membrane-spanning segment. Residues 89–148 (HLQSRYETWTNYAKRNHVFTKGNHTPLARFCQFELKTKMSEGYDMYSQPEELNVWLLFRQ) are Lumenal-facing. Residues 149 to 169 (FVDLILMQDFCTYMIYVYLSL) traverse the membrane as a helical segment. The Cytoplasmic segment spans residues 170–173 (PAQW). The helical transmembrane segment at 174 to 194 (SAMLNWRTGLGVSMILFNIWV) threads the bilayer. Residues 195–205 (KVDAHRVVKDY) are Lumenal-facing. The helical transmembrane segment at 206–226 (AWYWGDFFFLQESELVFDGVF) threads the bilayer. At 227–235 (NISPHPMYS) the chain is on the cytoplasmic side. The chain crosses the membrane as a helical span at residues 236-256 (IGYMGYYGLSLICGNYHVLLV). Topologically, residues 257-322 (SISGHLLQFL…SGFWVNNFDK (66 aa)) are lumenal. The chain crosses the membrane as a helical span at residues 323–343 (LRFTDYFTVGTSLALICWLFL). Residues 344–349 (ERPSVK) are Cytoplasmic-facing. Residues 350 to 370 (LLFNLTFFTKFVTSIVVCSIL) form a helical membrane-spanning segment. The Lumenal segment spans residues 371 to 396 (YLQSSQKWFTKLYLKNGYTQVYSYQQ). A helical membrane pass occupies residues 397-417 (WQFIYNFSSCLTYTLLFIQTL). Topologically, residues 418 to 424 (AKLFDDN) are cytoplasmic. Residues 425 to 445 (TYIEYTQFIFGLLLCAVQTWC) traverse the membrane as a helical segment. Residues 446–505 (NAEIRSAISDFGWFYGDFFLSNYIPTKSLTSHGIYRYLNNPETILGVAGVWGTVLMTDFS) are Lumenal-facing. The chain crosses the membrane as a helical span at residues 506–526 (WENIALACLWSGCNFIIVKFI). At 527–837 (EQPHMAKLYG…HIKKVLDDLE (311 aa)) the chain is on the cytoplasmic side.

This sequence belongs to the class VI-like SAM-binding methyltransferase superfamily. CHO2 family.

Its subcellular location is the endoplasmic reticulum membrane. It catalyses the reaction a 1,2-diacyl-sn-glycero-3-phosphoethanolamine + S-adenosyl-L-methionine = a 1,2-diacyl-sn-glycero-3-phospho-N-methylethanolamine + S-adenosyl-L-homocysteine + H(+). Its pathway is phospholipid metabolism; phosphatidylcholine biosynthesis. In terms of biological role, catalyzes the first step of the methylation pathway of phosphatidylcholine biosynthesis, the SAM-dependent methylation of phosphatidylethanolamine (PE) to phosphatidylmonomethylethanolamine (PMME). The polypeptide is Phosphatidylethanolamine N-methyltransferase (CHO2) (Zygosaccharomyces rouxii (strain ATCC 2623 / CBS 732 / NBRC 1130 / NCYC 568 / NRRL Y-229)).